A 59-amino-acid polypeptide reads, in one-letter code: UPF0509 protein KPK_3153 (59 aa).

It belongs to the UPF0509 family.

In Klebsiella pneumoniae (strain 342), this protein is UPF0509 protein KPK_3153.